A 440-amino-acid chain; its full sequence is tRNA modification GTPase MnmE (440 aa).

Residues arginine 34, glutamate 94, and arginine 134 each contribute to the (6S)-5-formyl-5,6,7,8-tetrahydrofolate site. Positions 229 to 367 (GVRVVLAGPP…LVALLLDRAA (139 aa)) constitute a TrmE-type G domain. Asparagine 239 contributes to the K(+) binding site. GTP-binding positions include 239–244 (NAGKST), 258–264 (TPIAGTT), 283–286 (DTAG), and 348–350 (SAR). Residue serine 243 coordinates Mg(2+). The K(+) site is built by threonine 258, isoleucine 260, and threonine 263. Threonine 264 serves as a coordination point for Mg(2+). Residue lysine 440 coordinates (6S)-5-formyl-5,6,7,8-tetrahydrofolate.

The protein belongs to the TRAFAC class TrmE-Era-EngA-EngB-Septin-like GTPase superfamily. TrmE GTPase family. As to quaternary structure, homodimer. Heterotetramer of two MnmE and two MnmG subunits. Requires K(+) as cofactor.

The protein localises to the cytoplasm. Its function is as follows. Exhibits a very high intrinsic GTPase hydrolysis rate. Involved in the addition of a carboxymethylaminomethyl (cmnm) group at the wobble position (U34) of certain tRNAs, forming tRNA-cmnm(5)s(2)U34. In Rhizorhabdus wittichii (strain DSM 6014 / CCUG 31198 / JCM 15750 / NBRC 105917 / EY 4224 / RW1) (Sphingomonas wittichii), this protein is tRNA modification GTPase MnmE.